Reading from the N-terminus, the 293-residue chain is Protease HtpX homolog (293 aa).

2 helical membrane-spanning segments follow: residues 4–24 (IFLF…TLRV) and 40–60 (SLLI…LLIS). His-146 is a binding site for Zn(2+). Residue Glu-147 is part of the active site. Residue His-150 participates in Zn(2+) binding. The next 2 helical transmembrane spans lie at 161–181 (LIQG…GYFI) and 197–217 (FITV…IVAW). Residue Glu-223 participates in Zn(2+) binding.

The protein belongs to the peptidase M48B family. Zn(2+) serves as cofactor.

It localises to the cell inner membrane. The chain is Protease HtpX homolog from Bordetella petrii (strain ATCC BAA-461 / DSM 12804 / CCUG 43448).